A 480-amino-acid chain; its full sequence is MTVRVRIAPSPTGNLHIGTARTAVFNWLFARHHRGKFILRVEDTDLERSRPEYTENIQAGLQWLGLNWDEGPFFQTQRLNYYRQAIQTLLDRGLAYRCYCTPEELEKMREEQKARNLAPRYDNRHRYLTPEQQAQFEQAGRKAVIRFIIDDDQEIIWQDLIREKVIWKGSDLGGDMVIARTSENGEENFGQPLYNLAVVVDDIDMEITHVIRGEDHIANTAKQILLYEALGAKVPEFAHSPLILNQEGRKLSKRDGVTSIDDFRKLGFLPQALVNYMTLLGWTPPDSTEEIFTLEAAAEVFSLERVNKAGAKFDWTKLDWINSQYLHRLTGEELVPLLLPYWQEAGYNFAAETDRAWLIGLATLIGPSLTRLSDAVAESRLLLTPLANYNQEALSQLQLEGVKDIIKDILAAITPDLTGEVAKGIVETTTKAHRVKKGLVMKSLRAALMGELHGPDLMQSWLLLNQKGWDISRLQQAVNS.

The 'HIGH' region signature appears at 9–19 (PSPTGNLHIGT). Positions 250 to 254 (KLSKR) match the 'KMSKS' region motif. Lys253 lines the ATP pocket.

Belongs to the class-I aminoacyl-tRNA synthetase family. Glutamate--tRNA ligase type 1 subfamily. In terms of assembly, monomer.

The protein localises to the cytoplasm. The catalysed reaction is tRNA(Glu) + L-glutamate + ATP = L-glutamyl-tRNA(Glu) + AMP + diphosphate. Its function is as follows. Catalyzes the attachment of glutamate to tRNA(Glu) in a two-step reaction: glutamate is first activated by ATP to form Glu-AMP and then transferred to the acceptor end of tRNA(Glu). The protein is Glutamate--tRNA ligase of Microcystis aeruginosa (strain NIES-843 / IAM M-2473).